The primary structure comprises 435 residues: CUB and peptidase domain-containing protein 1 (435 aa).

The first 16 residues, 1–16 (SGFHLSFSFFRRAVCG), serve as a signal peptide directing secretion. In terms of domain architecture, Peptidase S1 spans 25-261 (IVGGTVAPIN…LKSWITGKIS (237 aa)). Cysteines 50 and 66 form a disulfide. Catalysis depends on charge relay system residues histidine 65 and aspartate 116. Cystine bridges form between cysteine 151/cysteine 218, cysteine 182/cysteine 197, cysteine 208/cysteine 237, and cysteine 322/cysteine 341. Serine 212 functions as the Charge relay system in the catalytic mechanism. In terms of domain architecture, CUB spans 256 to 378 (ITGKISRSPA…SGFHLSFSFF (123 aa)).

Belongs to the peptidase S1 family. Component of the acid-insoluble organic matrix of the aragonitic skeleton (at protein level).

It is found in the secreted. The protein is CUB and peptidase domain-containing protein 1 of Acropora millepora (Staghorn coral).